The chain runs to 356 residues: Histidinol-phosphate aminotransferase 1 (356 aa).

Lysine 213 bears the N6-(pyridoxal phosphate)lysine mark.

This sequence belongs to the class-II pyridoxal-phosphate-dependent aminotransferase family. Histidinol-phosphate aminotransferase subfamily. In terms of assembly, homodimer. Pyridoxal 5'-phosphate serves as cofactor.

The enzyme catalyses L-histidinol phosphate + 2-oxoglutarate = 3-(imidazol-4-yl)-2-oxopropyl phosphate + L-glutamate. Its pathway is amino-acid biosynthesis; L-histidine biosynthesis; L-histidine from 5-phospho-alpha-D-ribose 1-diphosphate: step 7/9. This Bordetella parapertussis (strain 12822 / ATCC BAA-587 / NCTC 13253) protein is Histidinol-phosphate aminotransferase 1 (hisC1).